A 425-amino-acid chain; its full sequence is Probable isoprenylcysteine alpha-carbonyl methylesterase ICMEL1 (425 aa).

Basic and acidic residues predominate over residues 1–10 (MQVELADRAA). A disordered region spans residues 1-42 (MQVELADRAAARPSETGEAPPSSPAAAAAASAAAEDAPLLPG). Residues 24-34 (PAAAAAASAAA) show a composition bias toward low complexity. 2 helical membrane passes run 99-119 (FLAL…VVYY) and 154-174 (VVAF…GALL). Residues 160 to 162 (GGA) and 231 to 233 (QSA) contribute to the substrate site. Residues Ser-232, Asp-334, and His-366 contribute to the active site.

This sequence belongs to the AB hydrolase superfamily. Isoprenylcysteine methylesterase family.

Its subcellular location is the endoplasmic reticulum membrane. The protein localises to the golgi apparatus membrane. The enzyme catalyses [protein]-C-terminal S-[(2E,6E)-farnesyl]-L-cysteine methyl ester + H2O = [protein]-C-terminal S-[(2E,6E)-farnesyl]-L-cysteine + methanol + H(+). Its function is as follows. Catalyzes the demethylation of isoprenylcysteine methylesters. This Oryza sativa subsp. japonica (Rice) protein is Probable isoprenylcysteine alpha-carbonyl methylesterase ICMEL1 (IMCEL1).